The following is a 543-amino-acid chain: Putative fatty acyl-CoA reductase CG8303 (543 aa).

The disordered stretch occupies residues 1–29 (MAVITEHGGTTSSPPENNNSIGNGKHRVN). Polar residues predominate over residues 8–22 (GGTTSSPPENNNSIG). Transmembrane regions (helical) follow at residues 386 to 406 (LFFYLFHLLPAMVFIIPEKLF), 500 to 520 (VFNVLYYAGYVVIFAVLYFAL), and 522 to 542 (LTLGLQIGLTLAVLIWGFLVW).

It belongs to the fatty acyl-CoA reductase family.

It localises to the membrane. The catalysed reaction is a long-chain fatty acyl-CoA + 2 NADPH + 2 H(+) = a long-chain primary fatty alcohol + 2 NADP(+) + CoA. It catalyses the reaction hexadecanoyl-CoA + 2 NADPH + 2 H(+) = hexadecan-1-ol + 2 NADP(+) + CoA. The enzyme catalyses octadecanoyl-CoA + 2 NADPH + 2 H(+) = octadecan-1-ol + 2 NADP(+) + CoA. In terms of biological role, catalyzes the reduction of C16 or C18 fatty acyl-CoA to fatty alcohols. The polypeptide is Putative fatty acyl-CoA reductase CG8303 (Drosophila melanogaster (Fruit fly)).